The following is a 62-amino-acid chain: Sperm protamine P1 (62 aa).

Residues Met-1–Tyr-62 are disordered.

It belongs to the protamine P1 family. In terms of tissue distribution, testis.

The protein resides in the nucleus. It is found in the chromosome. In terms of biological role, protamines substitute for histones in the chromatin of sperm during the haploid phase of spermatogenesis. They compact sperm DNA into a highly condensed, stable and inactive complex. This Wallabia bicolor (Swamp wallaby) protein is Sperm protamine P1 (PRM1).